The primary structure comprises 339 residues: Phenylalanine--tRNA ligase alpha subunit (339 aa).

Over residues 1 to 14 (MEAKLKQLEEKAKQ) the composition is skewed to basic and acidic residues. Positions 1–20 (MEAKLKQLEEKAKQDIQAST) are disordered. Residue E254 coordinates Mg(2+).

This sequence belongs to the class-II aminoacyl-tRNA synthetase family. Phe-tRNA synthetase alpha subunit type 1 subfamily. As to quaternary structure, tetramer of two alpha and two beta subunits. The cofactor is Mg(2+).

It is found in the cytoplasm. The enzyme catalyses tRNA(Phe) + L-phenylalanine + ATP = L-phenylalanyl-tRNA(Phe) + AMP + diphosphate + H(+). In Alkaliphilus metalliredigens (strain QYMF), this protein is Phenylalanine--tRNA ligase alpha subunit.